Reading from the N-terminus, the 210-residue chain is ATP phosphoribosyltransferase (210 aa).

Belongs to the ATP phosphoribosyltransferase family. Short subfamily. In terms of assembly, heteromultimer composed of HisG and HisZ subunits.

Its subcellular location is the cytoplasm. The enzyme catalyses 1-(5-phospho-beta-D-ribosyl)-ATP + diphosphate = 5-phospho-alpha-D-ribose 1-diphosphate + ATP. It participates in amino-acid biosynthesis; L-histidine biosynthesis; L-histidine from 5-phospho-alpha-D-ribose 1-diphosphate: step 1/9. Functionally, catalyzes the condensation of ATP and 5-phosphoribose 1-diphosphate to form N'-(5'-phosphoribosyl)-ATP (PR-ATP). Has a crucial role in the pathway because the rate of histidine biosynthesis seems to be controlled primarily by regulation of HisG enzymatic activity. The chain is ATP phosphoribosyltransferase from Picosynechococcus sp. (strain ATCC 27264 / PCC 7002 / PR-6) (Agmenellum quadruplicatum).